A 295-amino-acid chain; its full sequence is GTP-binding protein GEM (295 aa).

The disordered stretch occupies residues C39–S64. Residues G81–S88 and N190–D193 contribute to the GTP site. A calmodulin-binding region spans residues A265–L284.

It belongs to the small GTPase superfamily. RGK family. As to quaternary structure, interacts with calmodulin in a Ca(2+)-dependent manner. Calmodulin binding significantly decreases GTP binding. Binds ROCK1. In terms of processing, phosphorylated on tyrosine residues.

It is found in the cell membrane. In terms of biological role, could be a regulatory protein, possibly participating in receptor-mediated signal transduction at the plasma membrane. Has guanine nucleotide-binding activity but undetectable intrinsic GTPase activity. This is GTP-binding protein GEM (Gem) from Mus musculus (Mouse).